The following is a 268-amino-acid chain: Bidirectional sugar transporter N3 (268 aa).

Topologically, residues 1 to 7 are extracellular; sequence MAISHNT. The chain crosses the membrane as a helical span at residues 8–28; the sequence is LAFTFGMLGNVISFLVFLAPI. The 87-residue stretch at 10 to 96 folds into the MtN3/slv 1 domain; sequence FTFGMLGNVI…ILYIIYAPRD (87 aa). Residues 29 to 42 are Cytoplasmic-facing; it reads STFYRIYKKKSTEG. Residues 43-63 form a helical membrane-spanning segment; that stretch reads FQSLPYLVALFSSMLWLYYAL. Residues 64–70 lie on the Extracellular side of the membrane; that stretch reads LKKDAFL. Residues 71–91 traverse the membrane as a helical segment; that stretch reads LITINSFGCVVETIYIILYII. Topologically, residues 92 to 103 are cytoplasmic; it reads YAPRDARNLTFK. Residues 104-124 traverse the membrane as a helical segment; it reads LLSAMNVGSFALILIVTNYAV. The Extracellular segment spans residues 125 to 131; that stretch reads HGPLRVQ. The MtN3/slv 2 domain occupies 131 to 214; it reads QVLGWVCVSL…QMLLYAIYRN (84 aa). A helical membrane pass occupies residues 132–152; it reads VLGWVCVSLSVSVFAAPLSIV. Residues 153–165 lie on the Cytoplasmic side of the membrane; sequence AQVVRTKSVEFMP. A helical transmembrane segment spans residues 166-186; sequence FNLSFTLTLSATMWFGYGFFL. Topologically, residues 187-190 are extracellular; it reads KDIC. The chain crosses the membrane as a helical span at residues 191–211; the sequence is IXLPNVLGXVLGLLQMLLYAI. Residues 212-268 are Cytoplasmic-facing; that stretch reads YRNGGEKAMKKEKKAPIEPPKSIVIETQLEKIEQEKKNKDDDNEEKDKSEEPIGCGV. The stretch at 234–262 forms a coiled coil; it reads IVIETQLEKIEQEKKNKDDDNEEKDKSEE. Over residues 243-262 the composition is skewed to basic and acidic residues; sequence IEQEKKNKDDDNEEKDKSEE. A disordered region spans residues 243–268; it reads IEQEKKNKDDDNEEKDKSEEPIGCGV.

It belongs to the SWEET sugar transporter family. Forms homooligomers and/or heterooligomers.

It localises to the cell membrane. Functionally, mediates both low-affinity uptake and efflux of sugar across the plasma membrane. This Medicago truncatula (Barrel medic) protein is Bidirectional sugar transporter N3 (N3).